The chain runs to 151 residues: UPF0735 ACT domain-containing protein SH1278 (151 aa).

Residues 74–149 (TLILYVNDIV…HVSKVELISM (76 aa)) form the ACT domain.

The protein belongs to the UPF0735 family.

This Staphylococcus haemolyticus (strain JCSC1435) protein is UPF0735 ACT domain-containing protein SH1278.